The following is a 371-amino-acid chain: Neuropeptide Y receptor type 6 (371 aa).

Topologically, residues 1–31 (MEVLTNQPTPNKTSGKSNNSAFFYFESCQPP) are extracellular. Asn-11 and Asn-18 each carry an N-linked (GlcNAc...) asparagine glycan. Residues 32–52 (FLAILLLLIAYTVILIMGIFG) form a helical membrane-spanning segment. The Cytoplasmic segment spans residues 53–82 (NLSLIIIIFKKQREAQNVTNILIANLSLSD). A helical transmembrane segment spans residues 83 to 103 (ILVCVMCIPFTVIYTLMDHWV). Over 104-111 (FGNTMCKL) the chain is Extracellular. Residues Cys-109 and Cys-196 are joined by a disulfide bond. A helical transmembrane segment spans residues 112 to 132 (TSYVQSVSVSVSIFSLVLIAI). Residues 133–150 (ERYQLIVNPRGWKPRVAH) lie on the Cytoplasmic side of the membrane. Residues 151 to 171 (AYWGIILIWLISLTLSIPLFL) traverse the membrane as a helical segment. At 172 to 206 (SYHLTNEPFHNLSLPTDIYTHQVACVEIWPSKLNQ) the chain is on the extracellular side. A glycan (N-linked (GlcNAc...) asparagine) is linked at Asn-182. A helical membrane pass occupies residues 207 to 227 (LLFSTSLFMLQYFVPLGFILI). At 228 to 263 (CYLKIVLCLRKRTRQVDRRKENKSRLNENKRVNVML) the chain is on the cytoplasmic side. A helical transmembrane segment spans residues 264 to 284 (ISIVVTFGACWLPLNIFNVIF). The Extracellular portion of the chain corresponds to 285-297 (DWYHEMLMSCHHD). Residues 298–318 (LVFVVCHLIAMVSTCINPLFY) form a helical membrane-spanning segment. At 319-371 (GFLNKNFQKDLMMLIHHCWCGEPQESYENIAMSTMHTDESKGSLKLAHIPTGI) the chain is on the cytoplasmic side. A lipid anchor (S-palmitoyl cysteine) is attached at Cys-336.

It belongs to the G-protein coupled receptor 1 family. In terms of tissue distribution, kidney and discrete regions of the hypothalamus including the suprachiasmatic nucleus, anterior hypothalamus, bed nucleus stria terminalis, and the ventromedial nucleus.

The protein resides in the cell membrane. Receptor for neuropeptide Y and peptide YY. The rank order of affinity of this receptor for pancreatic polypeptides is NPY = PYY &gt;= NPY (2-36) = [Leu-31, Pro-34] NPY &gt; NPY (13-36) &gt; PP. The activity of this receptor is mediated by G proteins that inhibits adenylate cyclase activity. This is Neuropeptide Y receptor type 6 (Npy6r) from Mus musculus (Mouse).